We begin with the raw amino-acid sequence, 886 residues long: Phosphatidylinositol 3-kinase catalytic subunit type 3 (886 aa).

A C2 PI3K-type domain is found at 35–184 (YKAVLEDPML…LAKLTKAHRQ (150 aa)). Positions 283-519 (DHDLKPNAAT…PKTHEMYLNV (237 aa)) constitute a PIK helical domain. Residues 414–464 (GLEPTKKDSQGPMLESMTTSGINPETDSSQILSNPLPAVSSPAPPSKTKDG) are disordered. Residues 429-444 (SMTTSGINPETDSSQI) show a composition bias toward polar residues. A compositionally biased stretch (low complexity) spans 445-454 (LSNPLPAVSS). In terms of domain architecture, PI3K/PI4K catalytic spans 604–870 (IPEKATLFKS…LIDDSVNALF (267 aa)). The segment at 610–616 (LFKSALM) is G-loop. The tract at residues 739 to 747 (GVGDRHLDN) is catalytic loop. Positions 758 to 779 (HIDFGYILGRDPKPLPPPMKLN) are activation loop.

This sequence belongs to the PI3/PI4-kinase family. In terms of assembly, component of the PI3K (PI3KC3/PI3K-III/class III phosphatidylinositol 3-kinase) complex the core of which is composed of the catalytic subunit pik3c3, the regulatory subunit pik3r4 and becn1 associating with additional regulatory/auxiliary subunits to form alternative complex forms. Mn(2+) is required as a cofactor.

The protein resides in the midbody. The enzyme catalyses a 1,2-diacyl-sn-glycero-3-phospho-(1D-myo-inositol) + ATP = a 1,2-diacyl-sn-glycero-3-phospho-(1D-myo-inositol-3-phosphate) + ADP + H(+). In terms of biological role, catalytic subunit of the PI3K complex that mediates formation of phosphatidylinositol 3-phosphate; different complex forms are believed to play a role in multiple membrane trafficking pathways. Involved in the transport of lysosomal enzyme precursors to lysosomes. Required for transport from early to late endosomes. The sequence is that of Phosphatidylinositol 3-kinase catalytic subunit type 3 (pik3c3) from Xenopus laevis (African clawed frog).